A 176-amino-acid polypeptide reads, in one-letter code: MNYCFLVFLVYLVFAVNGEDIWKVNKKCTSGGKNQDRKLDQIIQKGQQVKIQNICKLIRDKPHTNQEKEKCMKFCKKVCKGYRGACDGNICYCSRPSNLGPDWKVSKECKDPNNKDSRPTEIVPYRQQLAIPNICKLKNSETNEDSKCKKHCKEKCRGGNDAGCDGNFCYCRPKNK.

The N-terminal stretch at 1-18 is a signal peptide; sequence MNYCFLVFLVYLVFAVNG.

It localises to the secreted. The polypeptide is Salivary antigen 1 (Ctenocephalides felis (Cat flea)).